A 116-amino-acid polypeptide reads, in one-letter code: Nucleoid-associated protein A9601_00191 (116 aa).

The protein belongs to the YbaB/EbfC family. In terms of assembly, homodimer.

It localises to the cytoplasm. The protein localises to the nucleoid. In terms of biological role, binds to DNA and alters its conformation. May be involved in regulation of gene expression, nucleoid organization and DNA protection. The polypeptide is Nucleoid-associated protein A9601_00191 (Prochlorococcus marinus (strain AS9601)).